Consider the following 367-residue polypeptide: 3-dehydroquinate synthase (367 aa).

NAD(+)-binding positions include 99-103 (GVVGD), 123-124 (TT), Lys136, Lys145, and 163-166 (FLRT). Zn(2+) is bound by residues Glu178, His242, and His259.

Belongs to the sugar phosphate cyclases superfamily. Dehydroquinate synthase family. The cofactor is Co(2+). It depends on Zn(2+) as a cofactor. NAD(+) is required as a cofactor.

Its subcellular location is the cytoplasm. The catalysed reaction is 7-phospho-2-dehydro-3-deoxy-D-arabino-heptonate = 3-dehydroquinate + phosphate. Its pathway is metabolic intermediate biosynthesis; chorismate biosynthesis; chorismate from D-erythrose 4-phosphate and phosphoenolpyruvate: step 2/7. In terms of biological role, catalyzes the conversion of 3-deoxy-D-arabino-heptulosonate 7-phosphate (DAHP) to dehydroquinate (DHQ). This is 3-dehydroquinate synthase from Chlorobaculum parvum (strain DSM 263 / NCIMB 8327) (Chlorobium vibrioforme subsp. thiosulfatophilum).